The primary structure comprises 188 residues: dCTP deaminase (188 aa).

Residues Lys-111–Arg-116, Thr-135–Glu-137, Gln-156, Tyr-170, and Gln-180 contribute to the dCTP site. Catalysis depends on Glu-137, which acts as the Proton donor/acceptor.

Belongs to the dCTP deaminase family. In terms of assembly, homotrimer.

It catalyses the reaction dCTP + H2O + H(+) = dUTP + NH4(+). It functions in the pathway pyrimidine metabolism; dUMP biosynthesis; dUMP from dCTP (dUTP route): step 1/2. Catalyzes the deamination of dCTP to dUTP. This chain is dCTP deaminase, found in Paracidovorax citrulli (strain AAC00-1) (Acidovorax citrulli).